The sequence spans 429 residues: Enolase (429 aa).

Position 165 (Q165) interacts with (2R)-2-phosphoglycerate. E207 (proton donor) is an active-site residue. Mg(2+) contacts are provided by D244, E287, and D314. (2R)-2-phosphoglycerate contacts are provided by K339, R368, S369, and K390. K339 serves as the catalytic Proton acceptor.

It belongs to the enolase family. Mg(2+) serves as cofactor.

The protein localises to the cytoplasm. It is found in the secreted. Its subcellular location is the cell surface. It catalyses the reaction (2R)-2-phosphoglycerate = phosphoenolpyruvate + H2O. It functions in the pathway carbohydrate degradation; glycolysis; pyruvate from D-glyceraldehyde 3-phosphate: step 4/5. In terms of biological role, catalyzes the reversible conversion of 2-phosphoglycerate (2-PG) into phosphoenolpyruvate (PEP). It is essential for the degradation of carbohydrates via glycolysis. In Roseiflexus sp. (strain RS-1), this protein is Enolase.